The chain runs to 109 residues: Sperm-specific class P protein 19 (109 aa).

Residues 1–109 form the MSP domain; sequence MSLTADPPAC…TVTIPMSATA (109 aa).

In terms of assembly, monomer. As to expression, expressed at higher level in testis.

The chain is Sperm-specific class P protein 19 (ssp-19) from Caenorhabditis elegans.